A 135-amino-acid polypeptide reads, in one-letter code: Small ribosomal subunit protein uS9 (135 aa).

Residues 107 to 118 are compositionally biased toward basic and acidic residues; that stretch reads LVGDPRRTEPHK. A disordered region spans residues 107–135; it reads LVGDPRRTEPHKPNRSTKGPRAKRQKSYR. A compositionally biased stretch (basic residues) spans 119–135; it reads PNRSTKGPRAKRQKSYR.

The protein belongs to the universal ribosomal protein uS9 family. Part of the 30S ribosomal subunit.

The chain is Small ribosomal subunit protein uS9 from Pyrococcus furiosus (strain ATCC 43587 / DSM 3638 / JCM 8422 / Vc1).